The sequence spans 358 residues: Probable D-xylulose reductase A (358 aa).

Zn(2+) is bound by residues Cys47, His72, and Glu73. NAD(+) is bound at residue 182–187; that stretch reads GAGPVG.

It belongs to the zinc-containing alcohol dehydrogenase family. Zn(2+) serves as cofactor.

The catalysed reaction is xylitol + NAD(+) = D-xylulose + NADH + H(+). The protein operates within carbohydrate degradation; L-arabinose degradation via L-arabinitol; D-xylulose 5-phosphate from L-arabinose (fungal route): step 4/5. In terms of biological role, xylitol dehydrogenase which catalyzes the conversion of xylitol to D-xylulose. Xylose is a major component of hemicelluloses such as xylan. Most fungi utilize D-xylose via three enzymatic reactions, xylose reductase (XR), xylitol dehydrogenase (XDH), and xylulokinase, to form xylulose 5-phosphate, which enters pentose phosphate pathway. In Aspergillus niger (strain ATCC MYA-4892 / CBS 513.88 / FGSC A1513), this protein is Probable D-xylulose reductase A (xdhA).